The chain runs to 133 residues: Vascular endothelial growth factor homolog (133 aa).

A signal peptide spans 1-20; the sequence is MKLLVGILVAVCLHQYLLNA. Intrachain disulfides connect Cys36/Cys78, Cys67/Cys112, and Cys71/Cys114. The N-linked (GlcNAc...) asparagine; by host glycan is linked to Asn85.

This sequence belongs to the PDGF/VEGF growth factor family. As to quaternary structure, homodimer; disulfide-linked.

It is found in the secreted. In terms of biological role, induces endothelial proliferation. The chain is Vascular endothelial growth factor homolog from Orf virus (strain NZ2) (OV NZ-2).